A 221-amino-acid polypeptide reads, in one-letter code: Endo-1,4-beta-xylanase 11A (221 aa).

The N-terminal stretch at 1–17 (MVSFTTLLTAVATAVSA) is a signal peptide. Positions 28–218 (RGIQPGTGVH…SSGSAEIEVR (191 aa)) constitute a GH11 domain. An N-linked (GlcNAc...) asparagine glycan is attached at Asn89. The active-site Nucleophile is the Glu113. Glu205 acts as the Proton donor in catalysis.

This sequence belongs to the glycosyl hydrolase 11 (cellulase G) family.

Its subcellular location is the secreted. The enzyme catalyses Endohydrolysis of (1-&gt;4)-beta-D-xylosidic linkages in xylans.. It participates in glycan degradation; xylan degradation. Retains an activity of 52.5% in the presence of 5 mM SDS. In terms of biological role, endo-1,4-beta-xylanase involved in the hydrolysis of xylan, a major structural heterogeneous polysaccharide found in plant biomass representing the second most abundant polysaccharide in the biosphere, after cellulose. Is an alkali-tolerant enzyme, exhibiting 50.6% of activity at pH 9.0, and 26.9% even at pH 10.0. The sequence is that of Endo-1,4-beta-xylanase 11A from Humicola insolens (Soft-rot fungus).